Here is a 593-residue protein sequence, read N- to C-terminus: MAFRRTEGMSMIQALAMTVAEIPVFLYTTFGQSAFSQLRLTPGLRKVLFATALGTVALALAAHQLKRRRRKKKQVGPEMGGEQLGTVPMPILMARKVPSVKKGCSSRRVQSPSSKSNDTLSGISSIEPSKHSGSSHSLASMVVVNSSSPTAACSGSWEARGMEESVPTTDGSAESLYVQGMELFEEALQKWEQALSVGQRGDGGSTPTPGDSLQNPDTASEALSEPESQRREFAEKLESLLHRAYHLQEEFGSTFPSDSMLLDLERTLMLPLTEGSLRLRADDEDSLTSEDSFFSATEIFESLQIGEYPLPLSRPAAAYEEALQLVKEGRVPCRTLRTELLGCYSDQDFLAKLHCVRQAFEGLLEERSNQIFFGEVGRQMVTGLMTKAEKSPKGFLESYEEMLSYALRPETWATTRLELEGRGVACMSFFDIVLDFILMDAFEDLENPPSSVLAVLRNRWLSDSFKETALATACWSVLKAKRRLLMVPDGFISHFYSVSEHVSPVLAFGFLGPKPQLSEVCAFFKHQIVQYLRDMFDLDNVRYTSVPALAEDILQLSRRRSEILLGYLGAPVASSIGLNGPLPRENGPLEELQ.

2 helical membrane-spanning segments follow: residues 11 to 31 and 42 to 62; these read MIQALAMTVAEIPVFLYTTFG and PGLRKVLFATALGTVALALAA. Disordered stretches follow at residues 98-134, 150-171, and 197-229; these read PSVKKGCSSRRVQSPSSKSNDTLSGISSIEPSKHSGS, TAACSGSWEARGMEESVPTTDG, and VGQRGDGGSTPTPGDSLQNPDTASEALSEPESQ. 2 stretches are compositionally biased toward low complexity: residues 106–116 and 124–134; these read SRRVQSPSSKS and SSIEPSKHSGS. The residue at position 132 (S132) is a Phosphoserine. Residues 205-218 are compositionally biased toward polar residues; that stretch reads STPTPGDSLQNPDT. The residue at position 206 (T206) is a Phosphothreonine. Phosphoserine occurs at positions 220, 224, and 228. A Phosphothreonine modification is found at T273. A phosphoserine mark is found at S276 and S295. The FFAT signature appears at 292 to 298; that stretch reads SFFSATE.

This sequence belongs to the mitoguardin family. Homodimer and heterodimer; forms heterodimers with MIGA1. Interacts with PLD6/MitoPLD. Interacts (via phosphorylated FFAT motif) with MOSPD2. Post-translationally, phosphorylation at Ser-295 of the FFAT motif activates interaction with MOSPD2.

The protein localises to the mitochondrion outer membrane. Its function is as follows. Regulator of mitochondrial fusion. Acts by forming homo- and heterodimers at the mitochondrial outer membrane and facilitating the formation of PLD6/MitoPLD dimers. May act by regulating phospholipid metabolism via PLD6/MitoPLD. This chain is Mitoguardin 2, found in Mus musculus (Mouse).